The following is a 348-amino-acid chain: Probable dual-specificity RNA methyltransferase RlmN (348 aa).

Glu-90 (proton acceptor) is an active-site residue. The region spanning Ala-96–Glu-324 is the Radical SAM core domain. A disulfide bond links Cys-103 and Cys-329. The [4Fe-4S] cluster site is built by Cys-110, Cys-114, and Cys-117. S-adenosyl-L-methionine-binding positions include Gly-157–Glu-158, Ser-187, Ser-210–His-212, and Asn-286. Cys-329 (S-methylcysteine intermediate) is an active-site residue.

Belongs to the radical SAM superfamily. RlmN family. The cofactor is [4Fe-4S] cluster.

It localises to the cytoplasm. The enzyme catalyses adenosine(2503) in 23S rRNA + 2 reduced [2Fe-2S]-[ferredoxin] + 2 S-adenosyl-L-methionine = 2-methyladenosine(2503) in 23S rRNA + 5'-deoxyadenosine + L-methionine + 2 oxidized [2Fe-2S]-[ferredoxin] + S-adenosyl-L-homocysteine. The catalysed reaction is adenosine(37) in tRNA + 2 reduced [2Fe-2S]-[ferredoxin] + 2 S-adenosyl-L-methionine = 2-methyladenosine(37) in tRNA + 5'-deoxyadenosine + L-methionine + 2 oxidized [2Fe-2S]-[ferredoxin] + S-adenosyl-L-homocysteine. In terms of biological role, specifically methylates position 2 of adenine 2503 in 23S rRNA and position 2 of adenine 37 in tRNAs. The polypeptide is Probable dual-specificity RNA methyltransferase RlmN (Gloeobacter violaceus (strain ATCC 29082 / PCC 7421)).